The sequence spans 200 residues: Small ribosomal subunit protein uS4 (200 aa).

Residues 22-43 (TGKELERRPYAPGQHGPTQRKK) form a disordered region. Residues 92–170 (QRLDNIVYRL…VPEYVTFDAE (79 aa)) form the S4 RNA-binding domain.

Belongs to the universal ribosomal protein uS4 family. In terms of assembly, part of the 30S ribosomal subunit. Contacts protein S5. The interaction surface between S4 and S5 is involved in control of translational fidelity.

One of the primary rRNA binding proteins, it binds directly to 16S rRNA where it nucleates assembly of the body of the 30S subunit. In terms of biological role, with S5 and S12 plays an important role in translational accuracy. The polypeptide is Small ribosomal subunit protein uS4 (Listeria innocua serovar 6a (strain ATCC BAA-680 / CLIP 11262)).